A 662-amino-acid polypeptide reads, in one-letter code: MRTARFTLDPAFTVGAVNPRLFGSFVEHLGRCVYTGVFEPGHPTADAEGLRQDVLELVRELGVTAVRYPGGNFVSGYKWEDSVGPVEDRPRRLDLAWRSTETNRFGLSEYIAFLKKIGPQAEPMMAVNLGTRGVAEALELQEYANHPSGTALSDLRAEHGDKDPFGIRLWCLGNEMDGPWQTGHKTAEEYGRVAAETARAMRQIDPDVELVACGSSGQSMETFAEWEATVLKETYDLVDHISLHAYYEPHDGDVDSFLASAVDMESFIENVVATCDHVGARLKSKKKINLSFDEWNVWYMTKTQAEVSALDWPEAPRLLEDNYSVMDAVVFGSLLIALLRHADRVTVACLAQLVNVIAPIMTEPGGPAWRQTTFFPFSQASKYGRGEVLDVRVDSPTYDTAKYGEADLLHATAVVRARRSVTVFAVNRSRTGALPLEVALSGLELTEVVEHSALADADPDARNTLAEPERVVPHPVDGTSLRDGRLTAALEPLSWNSIRCADPAPGQPPRRPGEGTGFTGTPPAAPPSSSSAPRPDPTARRSPDRTARARVLAAARVRRMPFGRTKVCGAPVRPPTYAPRFQPFRKTWTRWAPAPRSGSPSRRSPTEASIPGGTSSRNVVRYQVTPWRRSPPGSAPGTPAPTRRRRTRAGASRGAPRTARRC.

Positions 27, 72, and 174 each coordinate alpha-L-arabinofuranose. The active-site Proton donor/acceptor is Glu175. Residues Tyr246, Glu294, and Gln352 each contribute to the alpha-L-arabinofuranose site. Glu294 functions as the Nucleophile in the catalytic mechanism. 3 disordered regions span residues 454–483 (LADADPDARNTLAEPERVVPHPVDGTSLRD), 497–548 (SIRC…RTAR), and 588–662 (WTRW…ARRC). Over residues 519 to 533 (TGTPPAAPPSSSSAP) the composition is skewed to low complexity. The segment covering 537 to 547 (PTARRSPDRTA) has biased composition (basic and acidic residues). Composition is skewed to low complexity over residues 590–603 (RWAPAPRSGSPSRR), 628–641 (RRSPPGSAPGTPAP), and 649–662 (AGASRGAPRTARRC).

The protein belongs to the glycosyl hydrolase 51 family. Homohexamer; trimer of dimers.

Its subcellular location is the cytoplasm. It carries out the reaction Hydrolysis of terminal non-reducing alpha-L-arabinofuranoside residues in alpha-L-arabinosides.. Its pathway is glycan metabolism; L-arabinan degradation. In terms of biological role, involved in the degradation of arabinan and is a key enzyme in the complete degradation of the plant cell wall. Catalyzes the cleavage of terminal alpha-(1-&gt;5)-arabinofuranosyl bonds in different hemicellulosic homopolysaccharides (arabino-oligoxylosides, branched and debranched arabinans). It acts rapidly on the short-chain arabino-oligoxylosides from digestion of xylan with xylanases. It hydrolyzes slowly arabinan and arabinoxylan from wheat and rye flour. The polypeptide is Intracellular exo-alpha-(1-&gt;5)-L-arabinofuranosidase (Streptomyces lividans).